The following is a 262-amino-acid chain: 27 kDa lipoprotein antigen (262 aa).

An N-terminal signal peptide occupies residues 1 to 28 (MSASCAVPRLTRFAVFAVAGATALSLSA). Composition is skewed to low complexity over residues 28–57 (ACGS…PSST) and 148–158 (STPGGASSTPP). 2 disordered regions span residues 28–60 (ACGS…TPNA) and 138–171 (VNGT…KPAW). C29 carries N-palmitoyl cysteine lipidation. C29 carries the S-diacylglycerol cysteine lipid modification.

The protein resides in the cell membrane. This chain is 27 kDa lipoprotein antigen (Mi43), found in Mycobacterium intracellulare.